The sequence spans 194 residues: dCTP deaminase (194 aa).

Residues 110 to 115 (RSSLAR), D128, 136 to 138 (VLE), Y171, K178, and Q182 contribute to the dCTP site. Catalysis depends on E138, which acts as the Proton donor/acceptor.

This sequence belongs to the dCTP deaminase family. In terms of assembly, homotrimer.

The catalysed reaction is dCTP + H2O + H(+) = dUTP + NH4(+). It functions in the pathway pyrimidine metabolism; dUMP biosynthesis; dUMP from dCTP (dUTP route): step 1/2. In terms of biological role, catalyzes the deamination of dCTP to dUTP. The protein is dCTP deaminase of Psychromonas ingrahamii (strain DSM 17664 / CCUG 51855 / 37).